The sequence spans 380 residues: MTFRSLLQEMRSRPHRVVHAAASTANSSDPFSWSELPEELLREILIRVETVDGGDWPSRRNVVACAGVCRSWRILTKEIVAVPEFSSKLTFPISLKQSGPRDSLVQCFIKRNRNTQSYHLYLGLTTSLTDNGKFLLAASKLKRATCTDYIISLRSDDISKRSNAYLGRMRSNFLGTKFTVFDGSQTGAAKMQKSRSSNFIKVSPRVPQGSYPIAHISYELNVLGSRGPRRMRCIMDTIPMSIVESRGVVASTSISSFSSRSSPVFRSHSKPLRSNSASCSDSGNNLGDPPLVLSNKAPRWHEQLRCWCLNFHGRVTVASVKNFQLVAVSDCEAGQTSERIILQFGKVGKDMFTMDYGYPISAFQAFAICLSSFETRIACE.

An F-box domain is found at 30 to 76; the sequence is PFSWSELPEELLREILIRVETVDGGDWPSRRNVVACAGVCRSWRILT. The interval 258–283 is disordered; the sequence is SSRSSPVFRSHSKPLRSNSASCSDSG. The span at 272–283 shows a compositional bias: polar residues; it reads LRSNSASCSDSG.

Belongs to the TUB family. As to quaternary structure, part of a SCF (SKP1-cullin-F-box) protein ligase complex. Interacts with SKP1A/ASK1 and XERICO. In terms of tissue distribution, ubiquitous.

It participates in protein modification; protein ubiquitination. Component of SCF(ASK-cullin-F-box) E3 ubiquitin ligase complexes, which may mediate the ubiquitination and subsequent proteasomal degradation of target proteins. Confers sensitivity to ABA during seed germination and early seedling development. This is Tubby-like F-box protein 9 from Arabidopsis thaliana (Mouse-ear cress).